Consider the following 295-residue polypeptide: Acetylglutamate kinase (295 aa).

Substrate-binding positions include 66–67 (GG), Arg-88, and Asn-193.

Belongs to the acetylglutamate kinase family. ArgB subfamily.

Its subcellular location is the cytoplasm. It catalyses the reaction N-acetyl-L-glutamate + ATP = N-acetyl-L-glutamyl 5-phosphate + ADP. Its pathway is amino-acid biosynthesis; L-arginine biosynthesis; N(2)-acetyl-L-ornithine from L-glutamate: step 2/4. In terms of biological role, catalyzes the ATP-dependent phosphorylation of N-acetyl-L-glutamate. This is Acetylglutamate kinase from Rhizobium etli (strain CIAT 652).